Consider the following 602-residue polypeptide: Peptide-N(4)-(N-acetyl-beta-glucosaminyl)asparagine amidase (602 aa).

Residues 2–130 (PVREVSRLPE…EKKFLERFVG (129 aa)) enclose the Thioredoxin domain. Zn(2+) is bound by residues Cys189, Cys192, Cys222, and Cys225. The Nucleophile role is filled by Cys248. Active-site residues include His275 and Asp292. In terms of domain architecture, PAW spans 400–602 (DMGGRTTGSK…ESMVVRVYMK (203 aa)).

It belongs to the transglutaminase-like superfamily. PNGase family. Zn(2+) serves as cofactor.

Its subcellular location is the cytoplasm. It is found in the endoplasmic reticulum. It catalyses the reaction Hydrolysis of an N(4)-(acetyl-beta-D-glucosaminyl)asparagine residue in which the glucosamine residue may be further glycosylated, to yield a (substituted) N-acetyl-beta-D-glucosaminylamine and a peptide containing an aspartate residue.. Its function is as follows. Specifically deglycosylates the denatured form of N-linked glycoproteins in the cytoplasm and assists their proteasome-mediated degradation. Cleaves the beta-aspartyl-glucosamine (GlcNAc) of the glycan and the amide side chain of Asn, converting Asn to Asp. Prefers proteins containing high-mannose over those bearing complex type oligosaccharides. Can recognize misfolded proteins in the endoplasmic reticulum that are exported to the cytosol to be destroyed and deglycosylate them, while it has no activity toward native proteins. Deglycosylation is a prerequisite for subsequent proteasome-mediated degradation of some, but not all, misfolded glycoproteins. Also displays oxidoreductase (thioredoxin) activity. This Caenorhabditis briggsae protein is Peptide-N(4)-(N-acetyl-beta-glucosaminyl)asparagine amidase (png-1).